Reading from the N-terminus, the 532-residue chain is Phosphoenolpyruvate carboxykinase (ATP) (532 aa).

Residues Arg60, Tyr195, and Lys201 each coordinate substrate. ATP-binding positions include Lys201, His221, and Gly237 to Thr245. 2 residues coordinate Mn(2+): Lys201 and His221. Asp258 is a Mn(2+) binding site. ATP contacts are provided by Glu287, Arg323, and Thr448. Arg323 contacts substrate.

It belongs to the phosphoenolpyruvate carboxykinase (ATP) family. Mn(2+) is required as a cofactor.

It localises to the cytoplasm. The enzyme catalyses oxaloacetate + ATP = phosphoenolpyruvate + ADP + CO2. It functions in the pathway carbohydrate biosynthesis; gluconeogenesis. Its function is as follows. Involved in the gluconeogenesis. Catalyzes the conversion of oxaloacetate (OAA) to phosphoenolpyruvate (PEP) through direct phosphoryl transfer between the nucleoside triphosphate and OAA. This is Phosphoenolpyruvate carboxykinase (ATP) from Christiangramia forsetii (strain DSM 17595 / CGMCC 1.15422 / KT0803) (Gramella forsetii).